Consider the following 153-residue polypeptide: Endoribonuclease YbeY (153 aa).

His-114, His-118, and His-124 together coordinate Zn(2+).

The protein belongs to the endoribonuclease YbeY family. Zn(2+) is required as a cofactor.

The protein resides in the cytoplasm. Its function is as follows. Single strand-specific metallo-endoribonuclease involved in late-stage 70S ribosome quality control and in maturation of the 3' terminus of the 16S rRNA. The sequence is that of Endoribonuclease YbeY from Shewanella sp. (strain MR-4).